The primary structure comprises 117 residues: Putative hydrolase fragment YghX (117 aa).

Residues 91–117 (DGLSSVGGYPGNDDKGRELQQQVDPTN) form a disordered region.

The sequence is that of Putative hydrolase fragment YghX (yghX) from Escherichia coli (strain K12).